The primary structure comprises 551 residues: Solute carrier family 22 member 4 (551 aa).

Residues methionine 1–leucine 20 are Cytoplasmic-facing. The chain crosses the membrane as a helical span at residues isoleucine 21–phenylalanine 41. The Extracellular portion of the chain corresponds to leucine 42–lysine 141. N-linked (GlcNAc...) asparagine glycans are attached at residues asparagine 57, asparagine 64, and asparagine 91. A helical transmembrane segment spans residues valine 142–glutamine 162. The Cytoplasmic segment spans residues leucine 163 to asparagine 171. A helical transmembrane segment spans residues valine 172–serine 192. Residues tryptophan 193 to threonine 197 lie on the Extracellular side of the membrane. A helical transmembrane segment spans residues valine 198–glycine 218. Glycine 218 to serine 225 serves as a coordination point for ATP. Over threonine 219–threonine 232 the chain is Cytoplasmic. The helical transmembrane segment at leucine 233 to isoleucine 253 threads the bilayer. The Extracellular portion of the chain corresponds to arginine 254–arginine 257. The helical transmembrane segment at methionine 258–proline 278 threads the bilayer. Residues glutamate 279–asparagine 337 lie on the Cytoplasmic side of the membrane. Residues isoleucine 338 to alanine 358 form a helical membrane-spanning segment. Over leucine 359–tyrosine 371 the chain is Extracellular. A helical membrane pass occupies residues leucine 372 to leucine 392. Residues arginine 393 to tyrosine 399 are Cytoplasmic-facing. A helical transmembrane segment spans residues isoleucine 400–valine 420. Topologically, residues aspartate 421–serine 426 are extracellular. Residues isoleucine 427 to phenylalanine 447 traverse the membrane as a helical segment. At threonine 448–alanine 460 the chain is on the cytoplasmic side. The chain crosses the membrane as a helical span at residues valine 461 to leucine 481. The Extracellular portion of the chain corresponds to glycine 482–arginine 486. Residues methionine 487 to phenylalanine 507 form a helical membrane-spanning segment. Residues proline 508 to phenylalanine 551 lie on the Cytoplasmic side of the membrane.

The protein belongs to the major facilitator (TC 2.A.1) superfamily. Organic cation transporter (TC 2.A.1.19) family. Interacts with PDZK1.

It localises to the apical cell membrane. Its subcellular location is the basal cell membrane. The protein localises to the mitochondrion membrane. The catalysed reaction is ergothioneine(out) + Na(+)(out) = ergothioneine(in) + Na(+)(in). It catalyses the reaction acetylcholine(in) = acetylcholine(out). It carries out the reaction (R)-carnitine(out) + Na(+)(out) = (R)-carnitine(in) + Na(+)(in). The enzyme catalyses glycine betaine(out) + Na(+)(out) = glycine betaine(in) + Na(+)(in). Allosterically activated by intracellular ATP. Functionally, transporter that mediates the transport of endogenous and microbial zwitterions and organic cations. Functions as a Na(+)-dependent and pH-dependent high affinity microbial symporter of potent food-derived antioxidant ergothioeine. Transports one sodium ion with one ergothioeine molecule. Involved in the absorption of ergothioneine from the luminal/apical side of the small intestine and renal tubular cells, and into non-parenchymal liver cells, thereby contributing to maintain steady-state ergothioneine level in the body. Also mediates the bidirectional transport of acetycholine, although the exact transport mechanism has not been fully identified yet. Most likely exports anti-inflammatory acetylcholine in non-neuronal tissues, thereby contributing to the non-neuronal cholinergic system. Displays a general physiological role linked to better survival by controlling inflammation and oxidative stress, which may be related to ergothioneine and acetycholine transports. May also function as a low-affinity Na(+)-dependent transporter of L-carnitine through the mitochondrial membrane, thereby maintaining intracellular carnitine homeostasis. May contribute to regulate the transport of cationic compounds in testis across the blood-testis-barrier. This is Solute carrier family 22 member 4 (SLC22A4) from Papio anubis (Olive baboon).